Here is a 275-residue protein sequence, read N- to C-terminus: Type III pantothenate kinase (275 aa).

9–16 (DIGNTRLK) contributes to the ATP binding site. Substrate contacts are provided by residues Y114 and 121–124 (GVDR). Catalysis depends on D123, which acts as the Proton acceptor. Residue T147 participates in ATP binding. T209 contributes to the substrate binding site.

This sequence belongs to the type III pantothenate kinase family. As to quaternary structure, homodimer. The cofactor is NH4(+). K(+) serves as cofactor.

It is found in the cytoplasm. It carries out the reaction (R)-pantothenate + ATP = (R)-4'-phosphopantothenate + ADP + H(+). It functions in the pathway cofactor biosynthesis; coenzyme A biosynthesis; CoA from (R)-pantothenate: step 1/5. Its function is as follows. Catalyzes the phosphorylation of pantothenate (Pan), the first step in CoA biosynthesis. The protein is Type III pantothenate kinase of Cupriavidus pinatubonensis (strain JMP 134 / LMG 1197) (Cupriavidus necator (strain JMP 134)).